Reading from the N-terminus, the 383-residue chain is MENFPTEYFLNTSVRLLEYIRYRDSNYTREERIENLHYAYNKAAHHFAQPRQQQLLKVDPKRLQASLQTIVGMVVYSWAKVSKECMADLSIHYTYTLVLDDSSDDPYPAMMNYFNDLQAGREQAHPWWALVNEHFPNVLRHFGPFCSLNLIRSTLDFFEGCWIEQYNFGGFPGSHDYPQFLRRMNGLGHCVGASLWPKEQFDERGLFLEITSAIAQMENWMVWVNDLMSFYKEFDDERDQISLVKNYVVSDEITLHEALEKLTQDTLHSSKQMVAVFSEKDPQVMDTIECFMHGYVTWHLCDHRYRLNEIYEKVKGQKTEDAEKFCKFYEQAANVGAVSPSEWAYPPIAQLANIRTKDVKDLKDVKDLKEIQKPLLSSIELVE.

It belongs to the trichodiene synthase family.

The catalysed reaction is (2E,6E)-farnesyl diphosphate = trichodiene + diphosphate. The protein operates within sesquiterpene biosynthesis; trichothecene biosynthesis. In terms of biological role, TS is a member of the terpene cyclase group of enzymes. It catalyzes the isomerization and cyclization of farnesyl pyro-phosphate to form trichodiene, the first cyclic intermediate in the biosynthetic pathway for trichothecenes. It serves to branch trichothecene biosynthesis from the isoprenoid pathway. In Gibberella pulicaris, this protein is Trichodiene synthase (TRI5).